The following is a 547-amino-acid chain: Glucose-6-phosphate isomerase 2 (547 aa).

Glu-351 serves as the catalytic Proton donor. Active-site residues include His-382 and Lys-508.

Belongs to the GPI family.

The protein resides in the cytoplasm. It catalyses the reaction alpha-D-glucose 6-phosphate = beta-D-fructose 6-phosphate. It functions in the pathway carbohydrate biosynthesis; gluconeogenesis. The protein operates within carbohydrate degradation; glycolysis; D-glyceraldehyde 3-phosphate and glycerone phosphate from D-glucose: step 2/4. Its function is as follows. Catalyzes the reversible isomerization of glucose-6-phosphate to fructose-6-phosphate. The polypeptide is Glucose-6-phosphate isomerase 2 (Neisseria meningitidis serogroup A / serotype 4A (strain DSM 15465 / Z2491)).